The following is a 388-amino-acid chain: Subtilisin-like serine protease AsES (388 aa).

The signal sequence occupies residues 1–15 (MRLSLVLALLPVAFG). Positions 16-105 (APTRRDEPAP…IEQDAIVTLA (90 aa)) are cleaved as a propeptide — removed in mature form. One can recognise a Peptidase S8 domain in the interval 114–388 (PWGLARISTR…RLAFNGNPSG (275 aa)). Cys-141 and Cys-230 form a disulfide bridge. Catalysis depends on charge relay system residues Asp-146 and His-176. N-linked (GlcNAc...) asparagine glycans are attached at residues Asn-232 and Asn-237. Cysteines 285 and 357 form a disulfide. Ser-331 serves as the catalytic Charge relay system.

The protein belongs to the peptidase S8 family.

The protein localises to the secreted. Its activity is regulated as follows. The elicitor proteolytic activity is completely inhibited by PMSF. The activity is also significantly reduced by aprotinin (leading to 37% residual activity), by leupeptin (leading to 54% residual activity), by the ovomucoid trypsin inhibitor (leading to 65% residual activity), and by p-aminobenzamidine (leading to 26% residual activity). Extracellular elicitor protein that induces a strong defense response in strawberry and confers both local and systemic plant resistance against the fungal pathogen Colletotricum acutatum, the casual agent of anthracnose disease. AsES activates a cascade of defense responses, including calcium influx, oxidative burst, hypersensitive cell-death response (HR), accumulation of autofluorescent compounds, cell-wall reinforcement with callose and lignin deposition, salicylic acid accumulation, and expression of defense-related genes, such as PR1, PG1, MYB30, RBOH-D, RBOH-F, CHI23, and FLS. The oxidative burst consists in a progressive extracellular accumulation of H(2)O(2) that starts immediately after the contact with AsES and is preceded by a rapid and transient cell membrane depolarization. During this phase takes place also a rapid intracellular accumulation of NO at the chloroplasts. After the first extracellular H(2)O(2) production phase, two intracellular H(2)O(2) accumulation events occur, the first 2 hours after induction, and the second 7 hours after induction. AsES also produces a transient increase of ion leakage, and a progressive alkalinization of the extracellular medium. Confers also local and systemic plant resistance against Botrytis cinerea in Arabidopsis thaliana. Systemic, but not local resistance is dependent on the length of exposure to AsES. The protection to B.cinerea is due to the induction of the plant defenses via the salicylic acid, jasmonic acid and ethylene signaling pathways. Exhibits subtilisin-like proteolytic activity which is necessary but not sufficient for its elicitor function in strawberry plants. Probably induces defense by means of proteolysis of one or multiple host proteins that are specific targets of this protease. The sequence is that of Subtilisin-like serine protease AsES from Sarocladium strictum (Black bundle disease fungus).